The following is a 594-amino-acid chain: Lipolysis-stimulated lipoprotein receptor (594 aa).

The first 35 residues, 1-35, serve as a signal peptide directing secretion; that stretch reads MAPAASACAGAPGSHPATTIFVCLFLIIYCPDRAS. At 36–206 the chain is on the extracellular side; it reads AIQVTVPDPY…PGFRAGPLED (171 aa). In terms of domain architecture, Ig-like V-type spans 89–181; sequence PASVDNQLNA…DLDGNNEAYA (93 aa). C113 and C165 are oxidised to a cystine. The chain crosses the membrane as a helical span at residues 207–227; that stretch reads WLFVVVVCLASLLFFLLLGIC. The Cytoplasmic segment spans residues 228-594; it reads WCQCCPHTCC…LALSRESLVV (367 aa). Phosphothreonine is present on T283. A Phosphoserine; by MAPK8 and MAPK9 modification is found at S308. 4 positions are modified to phosphoserine: S314, S332, S375, and S379. The span at 375–387 shows a compositional bias: basic and acidic residues; it reads SEVTSLHEDDWRS. The segment at 375-594 is disordered; it reads SEVTSLHEDD…LALSRESLVV (220 aa). A Phosphothreonine modification is found at T396. S407, S410, and S436 each carry phosphoserine. Residues 435 to 444 are compositionally biased toward basic and acidic residues; sequence RSVDALDDIN. Residues 445 to 460 show a composition bias toward low complexity; that stretch reads RPGSTESGRSSPPSSG. Residues S471 and S473 each carry the phosphoserine modification. Positions 472–550 are enriched in basic and acidic residues; the sequence is RSRDDLYDPD…GAGERRRVYR (79 aa). Y478 is subject to Phosphotyrosine. S576 is subject to Phosphoserine. Residue K583 forms a Glycyl lysine isopeptide (Lys-Gly) (interchain with G-Cter in ubiquitin) linkage. Phosphoserine occurs at positions 588 and 591.

The protein belongs to the immunoglobulin superfamily. LISCH7 family. In terms of assembly, homotrimer or homotetramer. Assembles into cell-cell contacts. Interacts (via the cytoplasmic domain) with MARVELD2 (via C-terminal cytoplasmic domain); the interaction is required to recruit MARVELD2 to tricellular contacts. Interacts with OCLN. Phosphorylation at Ser-308 by MAPK8/JNK1 and MAPK9/JNK2 may be required for exclusive localization at tricellular tight junstions. In terms of processing, polyubiquitinated at Lys-583 via 'Lys-63'-linked ubiquitin chains; deubiquitinated by USP53. In terms of tissue distribution, expressed in epithelial tissues (at protein level). Specifically expressed in liver and to a lower extent in kidney (at protein level). Also detected in brain, testis, ovaries, adrenal gland, intestine, muscle, and lung. In colon, only expressed in the lower portion of crypts. Expressed in the liver. Expressed in liver, stomach, small intestine and colon. Also detected in other epithelial tissues.

It is found in the cell membrane. The protein resides in the cell junction. The protein localises to the tight junction. Its function is as follows. Probable role in the clearance of triglyceride-rich lipoprotein from blood. Binds chylomicrons, LDL and VLDL in presence of free fatty acids and allows their subsequent uptake in the cells. Maintains epithelial barrier function by recruiting MARVELD2/tricellulin to tricellular tight junctions. This Mus musculus (Mouse) protein is Lipolysis-stimulated lipoprotein receptor.